The following is a 321-amino-acid chain: Cytochrome c biogenesis protein CcsA (321 aa).

The next 8 membrane-spanning stretches (helical) occupy residues 17-37 (IVSI…IVGL), 43-63 (KGMI…WIYS), 71-91 (LYES…VPKI), 98-118 (LSAI…SGLL), 143-163 (MVLS…LLVI), 225-245 (VISL…VWAN), 258-275 (ETWA…LHTR), and 286-306 (AIVA…VNLL).

It belongs to the CcmF/CycK/Ccl1/NrfE/CcsA family. May interact with Ccs1.

It is found in the plastid. The protein localises to the chloroplast thylakoid membrane. Its function is as follows. Required during biogenesis of c-type cytochromes (cytochrome c6 and cytochrome f) at the step of heme attachment. The protein is Cytochrome c biogenesis protein CcsA of Platanus occidentalis (Sycamore).